The chain runs to 788 residues: Structure-specific endonuclease subunit SLX4 (788 aa).

Disordered regions lie at residues 59–86 (LQNENLENKNKDTSITKPKRRSKRDNNR), 562–584 (KRQPVDSENEIRDSEDEGEHDNS), and 599–622 (DLVNLGRNPRNENDTSVLQVPSSP). A compositionally biased stretch (basic and acidic residues) spans 562 to 573 (KRQPVDSENEIR). Positions 612–622 (DTSVLQVPSSP) are enriched in polar residues.

This sequence belongs to the SLX4 family. Forms a heterodimer with SLX1. In terms of processing, phosphorylated in response to DNA damage.

The protein localises to the nucleus. In terms of biological role, regulatory subunit of the SLX1-SLX4 structure-specific endonuclease that resolves DNA secondary structures generated during DNA repair and recombination. Has endonuclease activity towards branched DNA substrates, introducing single-strand cuts in duplex DNA close to junctions with ss-DNA. This is Structure-specific endonuclease subunit SLX4 from Debaryomyces hansenii (strain ATCC 36239 / CBS 767 / BCRC 21394 / JCM 1990 / NBRC 0083 / IGC 2968) (Yeast).